The sequence spans 354 residues: Peptide chain release factor 1 (354 aa).

Position 230 is an N5-methylglutamine (Q230).

The protein belongs to the prokaryotic/mitochondrial release factor family. Methylated by PrmC. Methylation increases the termination efficiency of RF1.

It is found in the cytoplasm. In terms of biological role, peptide chain release factor 1 directs the termination of translation in response to the peptide chain termination codons UAG and UAA. This Rhodospirillum rubrum (strain ATCC 11170 / ATH 1.1.1 / DSM 467 / LMG 4362 / NCIMB 8255 / S1) protein is Peptide chain release factor 1.